The sequence spans 135 residues: Ribonuclease P protein component (135 aa).

It belongs to the RnpA family. As to quaternary structure, consists of a catalytic RNA component (M1 or rnpB) and a protein subunit.

It catalyses the reaction Endonucleolytic cleavage of RNA, removing 5'-extranucleotides from tRNA precursor.. RNaseP catalyzes the removal of the 5'-leader sequence from pre-tRNA to produce the mature 5'-terminus. It can also cleave other RNA substrates such as 4.5S RNA. The protein component plays an auxiliary but essential role in vivo by binding to the 5'-leader sequence and broadening the substrate specificity of the ribozyme. The polypeptide is Ribonuclease P protein component (Pseudomonas paraeruginosa (strain DSM 24068 / PA7) (Pseudomonas aeruginosa (strain PA7))).